The primary structure comprises 483 residues: Inositol-pentakisphosphate 2-kinase (483 aa).

The EXKPK motif signature appears at 140 to 144 (EIKPK). Residues 279-298 (SNRSGEPRKMHLSESKPHCE) are disordered. Basic and acidic residues predominate over residues 281 to 297 (RSGEPRKMHLSESKPHC).

It belongs to the IPK1 type 2 family. Expressed both maternally and zygotically. Expressed in cleavage-stage embryos. Ubiquitously distributed throughout blastula stages of embryogenesis. At the onset of gastrulation, it is enriched in cells around the blastoderm margin. At shield stage, expression is detected in the deep involuted cells that contribute to mesendoderm. During mid and late gastrula stages, it is strongly expressed in axial mesendoderm. However, it is not present in the nascent tailbud at yolk plug closure (YPC) stage. Expression in axial mesendoderm is reduced at the 2 somite stage (SS). At 6 SS, it is expressed in cells surrounding Kupffer's vesicle, but apparently not within. By 10 SS, it is no longer detected as a specific signal above background.

It is found in the cytoplasm. The protein resides in the nucleus. It catalyses the reaction 1D-myo-inositol 1,3,4,5,6-pentakisphosphate + ATP = 1D-myo-inositol hexakisphosphate + ADP + H(+). Its function is as follows. Phosphorylates Ins(1,3,4,5,6)P5 at position 2 to form Ins(1,2,3,4,5,6)P6 (InsP6 or phytate). InsP6 is involved in many processes such as mRNA export, non-homologous end-joining, endocytosis and ion channel regulation. InsP6 also acts as a key regulator of left-right asymmetry in embryo, probably by regulating asymmetric Ca(2+) during left-right specification. The polypeptide is Inositol-pentakisphosphate 2-kinase (ippk) (Danio rerio (Zebrafish)).